Consider the following 210-residue polypeptide: FMN-dependent NADH:quinone oxidoreductase (210 aa).

Residues S17 to S19 and S148 to G151 each bind FMN.

The protein belongs to the azoreductase type 1 family. Homodimer. Requires FMN as cofactor.

It carries out the reaction 2 a quinone + NADH + H(+) = 2 a 1,4-benzosemiquinone + NAD(+). It catalyses the reaction N,N-dimethyl-1,4-phenylenediamine + anthranilate + 2 NAD(+) = 2-(4-dimethylaminophenyl)diazenylbenzoate + 2 NADH + 2 H(+). Quinone reductase that provides resistance to thiol-specific stress caused by electrophilic quinones. Its function is as follows. Also exhibits azoreductase activity. Catalyzes the reductive cleavage of the azo bond in aromatic azo compounds to the corresponding amines. This Geotalea uraniireducens (strain Rf4) (Geobacter uraniireducens) protein is FMN-dependent NADH:quinone oxidoreductase.